The sequence spans 373 residues: Probable di-N-acetylchitobiase 1 (373 aa).

Residues 1 to 20 (MKIFIIISLILTILIIQSKS) form the signal peptide. The GH18 domain occupies 21 to 369 (KECPCSNVEL…SGMWGALNSF (349 aa)). N48 carries N-linked (GlcNAc...) asparagine glycosylation. Chitin-binding positions include 53–54 (PY) and 82–85 (NGVR). N99 is a glycosylation site (N-linked (GlcNAc...) asparagine). The Proton donor role is filled by E127. Chitin-binding positions include Y128 and 191–194 (MDYD). N-linked (GlcNAc...) asparagine glycosylation is found at N222, N250, N269, N279, and N288. Residue W347 participates in chitin binding.

The protein belongs to the glycosyl hydrolase 18 family.

It is found in the lysosome. In terms of biological role, involved in the degradation of asparagine-linked glycoproteins. May hydrolyze of N-acetyl-beta-D-glucosamine (1-4)N-acetylglucosamine chitobiose core from the reducing end of the bond. The polypeptide is Probable di-N-acetylchitobiase 1 (ctbs1) (Dictyostelium discoideum (Social amoeba)).